The primary structure comprises 557 residues: Polypyrimidine tract-binding protein 1 (557 aa).

M1 carries the N-acetylmethionine modification. S16 carries the phosphoserine modification. RRM domains are found at residues 59-143, 184-260, and 363-437; these read RVIH…SSPN, LRII…FSKL, and SVLL…LSKH. Residue K65 forms a Glycyl lysine isopeptide (Lys-Gly) (interchain with G-Cter in SUMO2) linkage. At Y127 the chain carries Phosphotyrosine. T138 carries the phosphothreonine modification. S141 carries the phosphoserine modification. A Glycyl lysine isopeptide (Lys-Gly) (interchain with G-Cter in SUMO2) cross-link involves residue K218. The disordered stretch occupies residues 437–460; that stretch reads HQSVQLPREGQEDQGLTKDYGNSP. S459 is modified (phosphoserine). The RRM 4 domain occupies 480–555; sequence ATLHLSNIPP…HHLRVSFSKS (76 aa).

As to quaternary structure, monomer. Part of a ternary complex containing KHSRP, PTBP1, PTBP2 and HNRPH1. Interacts with RAVER1 and SFPQ.

It localises to the nucleus. Functionally, plays a role in pre-mRNA splicing and in the regulation of alternative splicing events. Activates exon skipping of its own pre-mRNA during muscle cell differentiation. Binds to the polypyrimidine tract of introns. May promote RNA looping when bound to two separate polypyrimidine tracts in the same pre-mRNA. May promote the binding of U2 snRNP to pre-mRNA. Cooperates with RAVER1 to modulate switching between mutually exclusive exons during maturation of the TPM1 pre-mRNA. Represses the splicing of MAPT/Tau exon 10. Binds to polypyrimidine-rich controlling element (PCE) of CFTR and promotes exon skipping of CFTR exon 9, thereby antagonizing TIA1 and its role in exon inclusion of CFTR exon 9. Plays a role in the splicing of pyruvate kinase PKM by binding repressively to a polypyrimidine tract flanking PKM exon 9, inhibiting exon 9 inclusion and resulting in exon 10 inclusion and production of the PKM M2 isoform. The chain is Polypyrimidine tract-binding protein 1 (PTBP1) from Bos taurus (Bovine).